A 390-amino-acid polypeptide reads, in one-letter code: MSDIHVTPVFADAAPCASPAPEKINLLDLDRRQMREFFVQMGEKPFRADQIMKWIYHYCCDDFDAMTDINKVLRARLKQVAEIRAPEVAVEQRSSDGTIKWALQVGDQRVETVYIPEDDRATLCVSSQVGCALECKFCSTAQQGFNRNLRVSEIIGQVWRAAKIIGAQKVTGNRPITNVVMMGMGEPLLNLTNVIPAMEIMLDDFGFGLSKRRVTLSTSGVVPALDKLGDTIDVALAISLHAPNDTIRDEIVPINRKYNIDMFLGSVRRYLEKSNANQGRVTVEYVMLDHINDGTEHAHQLAECLKDTPCKINLIPWNPFPGAPFGRSSNSRIDRFSKVLMEYGFTVIVRKTRGDDIDAACGQLAGEVIDRTKRTLKKQAAGEPINVREV.

Glu111 serves as the catalytic Proton acceptor. The Radical SAM core domain occupies 117-356; that stretch reads EDDRATLCVS…VIVRKTRGDD (240 aa). Cys124 and Cys361 form a disulfide bridge. [4Fe-4S] cluster is bound by residues Cys131, Cys135, and Cys138. S-adenosyl-L-methionine contacts are provided by residues 185 to 186, Ser217, 239 to 241, and Asn318; these read GE and SLH. Catalysis depends on Cys361, which acts as the S-methylcysteine intermediate.

Belongs to the radical SAM superfamily. RlmN family. Requires [4Fe-4S] cluster as cofactor.

The protein localises to the cytoplasm. The enzyme catalyses adenosine(2503) in 23S rRNA + 2 reduced [2Fe-2S]-[ferredoxin] + 2 S-adenosyl-L-methionine = 2-methyladenosine(2503) in 23S rRNA + 5'-deoxyadenosine + L-methionine + 2 oxidized [2Fe-2S]-[ferredoxin] + S-adenosyl-L-homocysteine. The catalysed reaction is adenosine(37) in tRNA + 2 reduced [2Fe-2S]-[ferredoxin] + 2 S-adenosyl-L-methionine = 2-methyladenosine(37) in tRNA + 5'-deoxyadenosine + L-methionine + 2 oxidized [2Fe-2S]-[ferredoxin] + S-adenosyl-L-homocysteine. Its function is as follows. Specifically methylates position 2 of adenine 2503 in 23S rRNA and position 2 of adenine 37 in tRNAs. m2A2503 modification seems to play a crucial role in the proofreading step occurring at the peptidyl transferase center and thus would serve to optimize ribosomal fidelity. This Edwardsiella ictaluri (strain 93-146) protein is Dual-specificity RNA methyltransferase RlmN.